Here is a 123-residue protein sequence, read N- to C-terminus: Zinc metalloproteinase-disintegrin-like jerdohagin (123 aa).

Positions arginine 6–glutamate 52 constitute a Peptidase M12B domain. A Zn(2+)-binding site is contributed by histidine 12. Residues cysteine 19 and cysteine 24 are joined by a disulfide bond. Ca(2+)-binding residues include cysteine 48 and asparagine 51. Residues leucine 53–asparagine 80 form the Disintegrin domain. Disulfide bonds link cysteine 59–cysteine 65, cysteine 64–cysteine 78, cysteine 72–cysteine 90, and cysteine 106–cysteine 116. The D/ECD-tripeptide signature appears at glutamate 71–aspartate 73.

This sequence belongs to the venom metalloproteinase (M12B) family. P-III subfamily. P-IIIa sub-subfamily. As to quaternary structure, monomer. It depends on Zn(2+) as a cofactor. In terms of processing, the N-terminus is blocked. Expressed by the venom gland.

Its subcellular location is the secreted. Its proteolytic and hemorrhagic activities are inhibited by EDTA, but not by PMSF. In terms of biological role, snake venom metalloproteinase that has high hemorrhagic activity and degrades the alpha-chain of fibrinogen (FGA), leaving the beta- and the gamma-chain intact. It may also inhibit platelet aggregation. Cleaves insulin B chain at '25-Phe-|-Val-26', '26-Val-|-Asn-27', '29-His-|-Leu-30', '30-Leu-|-Cys-31', '33-Ser-|-His-34', '35-Leu-|-Val-36', '40-Tyr-|-Leu-41', '41-Leu-|-Val-42', '42-Val-|-Cys-43', '43-Cys-|-Gly-44', '44-Gly-|-Glu-45', '46-Arg-|-Gly-47', '47-Gly-|-Phe-48', '49-Phe-|-Tyr-50' and '52-Pro-|-Lys-53' bonds. Also cleaves human prothrombin (72 kDa) and activation fragment F1 (27 kDa) of activated human prothrombin, to generate two new proteins of 68 and 23 kDa. This Protobothrops jerdonii (Jerdon's pitviper) protein is Zinc metalloproteinase-disintegrin-like jerdohagin.